A 1164-amino-acid polypeptide reads, in one-letter code: DNA-directed RNA polymerase 132 kDa polypeptide (1164 aa).

The protein belongs to the RNA polymerase beta chain family. The DNA-dependent RNA polymerase used for intermediate and late genes expression consists of eight subunits (147) kDa, (133) kDa, (35) kDa, (30) kDa, (22) kDa, (19) kDa, (18) kDa and (7) kDa totalling more than 500 kDa in mass. The same holoenzyme, with the addition of the transcription-specificity factor RAP94, is used for early gene expression.

Its subcellular location is the virion. The enzyme catalyses RNA(n) + a ribonucleoside 5'-triphosphate = RNA(n+1) + diphosphate. Functionally, part of the DNA-dependent RNA polymerase which catalyzes the transcription of viral DNA into RNA using the four ribonucleoside triphosphates as substrates. Responsible for the transcription of early, intermediate and late genes. DNA-dependent RNA polymerase associates with the early transcription factor (ETF), itself composed of D6 and A7, thereby allowing the early genes transcription. Late transcription, and probably also intermediate transcription, require newly synthesized RNA polymerase. In Camelus, this protein is DNA-directed RNA polymerase 132 kDa polypeptide (RPO132).